A 345-amino-acid chain; its full sequence is Mitochondrial substrate carrier family protein J (345 aa).

Topologically, residues 1–31 (MSSSHTIQETKEVHTKTNKRIQWDDLDPKRY) are mitochondrial intermembrane. 3 Solcar repeats span residues 30–118 (RYYF…VKQG), 129–217 (DLLF…SKSK), and 255–342 (EDPI…VKKL). A helical membrane pass occupies residues 32-52 (YFYNFLLGGSIDLLMFPLDVI). Topologically, residues 53 to 88 (RTRLQVQGSQNVIQSFPQYNGTFDGFKKLIRLEGKR) are mitochondrial matrix. A helical transmembrane segment spans residues 89–110 (ALYKGFLTSECGYLCSRAIYFG). The Mitochondrial intermembrane segment spans residues 111 to 129 (SYEFVKQGFLKGRSDSDSD). A helical membrane pass occupies residues 130 to 150 (LLFVTTISGAISEALASVIWV). At 151–191 (PFDVATQSVQIQGSLSKPKYKGGSDVFKKIYGERGIKGLYK) the chain is on the mitochondrial matrix side. Residues 192-208 (GFGATIIRNVPYSGIWW) form a helical membrane-spanning segment. The Mitochondrial intermembrane portion of the chain corresponds to 209-257 (GTYEISKSKLTQFNIRQKLGLKERSSHSLAVSAEIDKNNPSHEVENEDP). Residues 258 to 278 (IIHFISGFFAAVFATSITNPL) form a helical membrane-spanning segment. Residues 279–316 (DVAKTRLQTGVFPENEKPNFYTIIKSTIRKEGIRALWK) are Mitochondrial matrix-facing. The helical transmembrane segment at 317 to 337 (GLVPSLLTSTPYSMISIFLYE) threads the bilayer. Topologically, residues 338-345 (EVKKLSLK) are mitochondrial intermembrane.

The protein belongs to the mitochondrial carrier (TC 2.A.29) family.

It is found in the mitochondrion inner membrane. Its function is as follows. Mitochondrial solute carriers shuttle metabolites, nucleotides, and cofactors through the mitochondrial inner membrane. In Dictyostelium discoideum (Social amoeba), this protein is Mitochondrial substrate carrier family protein J (mcfJ).